The chain runs to 200 residues: Proteasome subunit beta 2 (200 aa).

A propeptide spans 1 to 10 (MSDQLELMTG) (removed in mature form; by autocatalysis). The active-site Nucleophile is Thr11.

This sequence belongs to the peptidase T1B family. As to quaternary structure, the 20S proteasome core is composed of 14 alpha and 14 beta subunits that assemble into four stacked heptameric rings, resulting in a barrel-shaped structure. The two inner rings, each composed of seven catalytic beta subunits, are sandwiched by two outer rings, each composed of seven alpha subunits. The catalytic chamber with the active sites is on the inside of the barrel. Has a gated structure, the ends of the cylinder being occluded by the N-termini of the alpha-subunits. Is capped at one or both ends by the proteasome regulatory ATPase, PAN.

Its subcellular location is the cytoplasm. The enzyme catalyses Cleavage of peptide bonds with very broad specificity.. With respect to regulation, the formation of the proteasomal ATPase PAN-20S proteasome complex, via the docking of the C-termini of PAN into the intersubunit pockets in the alpha-rings, triggers opening of the gate for substrate entry. Interconversion between the open-gate and close-gate conformations leads to a dynamic regulation of the 20S proteasome proteolysis activity. Its function is as follows. Component of the proteasome core, a large protease complex with broad specificity involved in protein degradation. In Caldivirga maquilingensis (strain ATCC 700844 / DSM 13496 / JCM 10307 / IC-167), this protein is Proteasome subunit beta 2.